Consider the following 761-residue polypeptide: Dipeptidyl-peptidase 4 (761 aa).

Positions 1–15 (MTLSAWIILVTLAMA) are cleaved as a signal peptide. Active-site charge relay system residues include Ser622, Asp706, and His738.

Belongs to the peptidase S9C family.

The protein localises to the membrane. Its function is as follows. May be involved in metabolism of dipeptides or may affect host defense mechanisms. The chain is Dipeptidyl-peptidase 4 (DPP) from Giardia intestinalis (Giardia lamblia).